We begin with the raw amino-acid sequence, 446 residues long: Phosphoglucosamine mutase (446 aa).

Ser-100 serves as the catalytic Phosphoserine intermediate. Mg(2+) is bound by residues Ser-100, Asp-241, Asp-243, and Asp-245. At Ser-100 the chain carries Phosphoserine.

Belongs to the phosphohexose mutase family. The cofactor is Mg(2+). In terms of processing, activated by phosphorylation.

The enzyme catalyses alpha-D-glucosamine 1-phosphate = D-glucosamine 6-phosphate. In terms of biological role, catalyzes the conversion of glucosamine-6-phosphate to glucosamine-1-phosphate. This is Phosphoglucosamine mutase from Methylorubrum extorquens (strain CM4 / NCIMB 13688) (Methylobacterium extorquens).